The sequence spans 296 residues: 4-hydroxybenzoate octaprenyltransferase (296 aa).

A run of 8 helical transmembrane segments spans residues 28–48 (IGTLLLLWPTYWALWLASDGI), 51–71 (LAVLAAFTIGTFLMRSAGCVI), 102–122 (LLLTAFLCLLAALCLIPLNHL), 143–163 (FFPIPQFYLGFAFSFGIPMAF), 174–194 (AWILFAANVLWTLAYDTVYAM), 212–232 (FGRYDIAAVMLCHGGFTLLMA), 233–253 (VLGAVIGAAWAYWTAIPIVLL), and 274–294 (FLANNRIGWVWFAAIFAHTFF).

The protein belongs to the UbiA prenyltransferase family. The cofactor is Mg(2+).

The protein resides in the cell inner membrane. It catalyses the reaction all-trans-octaprenyl diphosphate + 4-hydroxybenzoate = 4-hydroxy-3-(all-trans-octaprenyl)benzoate + diphosphate. It functions in the pathway cofactor biosynthesis; ubiquinone biosynthesis. Functionally, catalyzes the prenylation of para-hydroxybenzoate (PHB) with an all-trans polyprenyl group. Mediates the second step in the final reaction sequence of ubiquinone-8 (UQ-8) biosynthesis, which is the condensation of the polyisoprenoid side chain with PHB, generating the first membrane-bound Q intermediate 3-octaprenyl-4-hydroxybenzoate. This chain is 4-hydroxybenzoate octaprenyltransferase, found in Neisseria gonorrhoeae (strain ATCC 700825 / FA 1090).